The sequence spans 350 residues: Nicotinate-nucleotide--dimethylbenzimidazole phosphoribosyltransferase (350 aa).

Residue glutamate 317 is the Proton acceptor of the active site.

It belongs to the CobT family.

It catalyses the reaction 5,6-dimethylbenzimidazole + nicotinate beta-D-ribonucleotide = alpha-ribazole 5'-phosphate + nicotinate + H(+). The protein operates within nucleoside biosynthesis; alpha-ribazole biosynthesis; alpha-ribazole from 5,6-dimethylbenzimidazole: step 1/2. Its function is as follows. Catalyzes the synthesis of alpha-ribazole-5'-phosphate from nicotinate mononucleotide (NAMN) and 5,6-dimethylbenzimidazole (DMB). This Shewanella sp. (strain W3-18-1) protein is Nicotinate-nucleotide--dimethylbenzimidazole phosphoribosyltransferase.